We begin with the raw amino-acid sequence, 1335 residues long: Bifunctional autolysin (1335 aa).

An N-terminal signal peptide occupies residues 1-29; it reads MAKKFNYKLPSMVALTLFGTAFTAHQANA. Disordered regions lie at residues 51 to 88, 100 to 262, and 514 to 535; these read QAEK…QSTT, NEIS…KYKE, and WGTT…NNKL. 5 stretches are compositionally biased toward polar residues: residues 58–88, 100–127, 143–155, 176–223, and 244–258; these read EVTQ…QSTT, NEIS…VTKN, TDTN…QSVA, TASQ…NASG, and SLNN…TTSY. The N-acetylmuramoyl-L-alanine amidase stretch occupies residues 303-863; the sequence is VSSQKTSSLP…LSTQSTPAPK (561 aa). Over residues 515 to 531 the composition is skewed to low complexity; it reads GTTSTKPSQPSKPSGGT. GW domains follow at residues 533-610, 612-686, 700-774, 776-850, 868-943, 945-1020, and 1023-1096; these read NKLT…YNTA, APVK…TASK, TVTN…YNTA, SPVK…APSK, STQT…TQNI, KQTQ…QNST, and QSTP…KEKI. Residues 864–1335 are endo-beta-N-acetylglucosaminidase; the sequence is QVKPSTQTVN…GKYFEIPTYK (472 aa).

It in the N-terminal section; belongs to the N-acetylmuramoyl-L-alanine amidase 2 family. The protein in the C-terminal section; belongs to the glycosyl hydrolase 73 family. In terms of assembly, oligomer; forms a ring structure at the cell surface which is important for efficient partitioning of daughter cells after cell division. In terms of processing, undergoes proteolytic processing to generate the two extracellular lytic enzymes, probably at the septal region on the cell surface.

The protein resides in the secreted. It catalyses the reaction Hydrolyzes the link between N-acetylmuramoyl residues and L-amino acid residues in certain cell-wall glycopeptides.. The enzyme catalyses an N(4)-(oligosaccharide-(1-&gt;3)-[oligosaccharide-(1-&gt;6)]-beta-D-Man-(1-&gt;4)-beta-D-GlcNAc-(1-&gt;4)-alpha-D-GlcNAc)-L-asparaginyl-[protein] + H2O = an oligosaccharide-(1-&gt;3)-[oligosaccharide-(1-&gt;6)]-beta-D-Man-(1-&gt;4)-D-GlcNAc + N(4)-(N-acetyl-beta-D-glucosaminyl)-L-asparaginyl-[protein]. Functionally, endohydrolysis of the di-N-acetylchitobiosyl unit in high-mannose glycopeptides and glycoproteins containing the -[(Man)5(GlcNAc)2]-Asn structure. One N-acetyl-D-glucosamine residue remains attached to the protein; the rest of the oligosaccharide is released intact. Cleaves the peptidoglycan connecting the daughter cells at the end of the cell division cycle, resulting in the separation of the two newly divided cells. Acts as an autolysin in penicillin-induced lysis. As a bacterial surface-associated protein, mediates attachment to polystyrene surfaces, contributing to biofilm formation. Also has vitronectin-binding activity. The chain is Bifunctional autolysin (atl) from Staphylococcus epidermidis.